The following is an 882-amino-acid chain: Alanine--tRNA ligase (882 aa).

Residues H568, H572, C670, and H674 each contribute to the Zn(2+) site.

This sequence belongs to the class-II aminoacyl-tRNA synthetase family. Requires Zn(2+) as cofactor.

It localises to the cytoplasm. It catalyses the reaction tRNA(Ala) + L-alanine + ATP = L-alanyl-tRNA(Ala) + AMP + diphosphate. Functionally, catalyzes the attachment of alanine to tRNA(Ala) in a two-step reaction: alanine is first activated by ATP to form Ala-AMP and then transferred to the acceptor end of tRNA(Ala). Also edits incorrectly charged Ser-tRNA(Ala) and Gly-tRNA(Ala) via its editing domain. The chain is Alanine--tRNA ligase from Syntrophotalea carbinolica (strain DSM 2380 / NBRC 103641 / GraBd1) (Pelobacter carbinolicus).